Reading from the N-terminus, the 82-residue chain is Small ribosomal subunit protein bS16 (82 aa).

This sequence belongs to the bacterial ribosomal protein bS16 family.

The polypeptide is Small ribosomal subunit protein bS16 (Marinomonas sp. (strain MWYL1)).